The primary structure comprises 629 residues: MSILKAENLYKTYGDKTLFDHISFHIEENERIGLIGPNGTGKSTLLKVIAGLESIEEGEITKSGSVQVEFLHQDPELPAGQTVLEHIYSGESAVMKTLREYEKALYELGKDPENEQRQKHLLAAQAKMDANNAWDANTLAKTVLSKLGVNDVTKPVNELSGGQKKRVAIAKNLIQPADLLILDEPTNHLDNETIEWLEGYLSQYPGAVMLVTHDRYFLNRVTNRIYELERGSLYTYKGNYEVFLEKRAEREAQAEQKETKRQNLLRRELAWLRRGAKARSTKQKARIDRVETLKEQTGPQSSGSLDFAIGSHRLGKQVIEAENVMIAYDGRMLVDRFNELVIPGERIGIIGPNGIGKTTLLNALAGRHTPDGGDITIGQTVRIGYYTQDHSEMNGELKVIDYIKETAEVVKTADGDMITAEQMLERFLFPRSMQQTYIRKLSGGEKRRLYLLQVLMQEPNVLFLDEPTNDLDTETLSVLEDYIDQFPGVVITVSHDRYFLDRVVDRLIVFEGNGVISRFQGSYSDYMEESKAKKAAPKPAAEEKTAEAEPKKKRKKLSYKDQLEWDGIEDKIAQLEEKHEQLEADIAAAGSDFGKIQELMAEQAKTAEELEAAMDRWTELSLMIEELES.

The region spanning Leu-4–Glu-255 is the ABC transporter 1 domain. Gly-36–Ser-43 is an ATP binding site. The tract at residues Lys-284–Ser-304 is disordered. The span at Ala-285–Lys-294 shows a compositional bias: basic and acidic residues. The span at Glu-295–Ser-304 shows a compositional bias: polar residues. One can recognise an ABC transporter 2 domain in the interval Ile-319–Pro-537. Residue Gly-351 to Thr-358 coordinates ATP. A disordered region spans residues Ser-530 to Lys-555. Over residues Ala-540–Pro-550 the composition is skewed to basic and acidic residues. Residues Lys-560 to Ser-629 are a coiled coil.

This sequence belongs to the ABC transporter superfamily.

This is an uncharacterized protein from Bacillus subtilis (strain 168).